We begin with the raw amino-acid sequence, 267 residues long: Glucosamine-6-phosphate deaminase (267 aa).

The active-site Proton acceptor; for enolization step is aspartate 72. Aspartate 141 (for ring-opening step) is an active-site residue. Histidine 143 (proton acceptor; for ring-opening step) is an active-site residue. The For ring-opening step role is filled by glutamate 148.

Belongs to the glucosamine/galactosamine-6-phosphate isomerase family. NagB subfamily. In terms of assembly, homohexamer.

The catalysed reaction is alpha-D-glucosamine 6-phosphate + H2O = beta-D-fructose 6-phosphate + NH4(+). The protein operates within amino-sugar metabolism; N-acetylneuraminate degradation; D-fructose 6-phosphate from N-acetylneuraminate: step 5/5. With respect to regulation, allosterically activated by N-acetylglucosamine 6-phosphate (GlcNAc6P). Functionally, catalyzes the reversible isomerization-deamination of glucosamine 6-phosphate (GlcN6P) to form fructose 6-phosphate (Fru6P) and ammonium ion. The chain is Glucosamine-6-phosphate deaminase from Actinobacillus pleuropneumoniae serotype 5b (strain L20).